A 341-amino-acid polypeptide reads, in one-letter code: Malate dehydrogenase 2, mitochondrial (341 aa).

A mitochondrion-targeting transit peptide spans 1 to 22 (MFRSMIVRSASPVKQGLLRRGF). NAD(+)-binding positions include 36–42 (GAAGGIG) and aspartate 62. The substrate site is built by arginine 109 and arginine 115. Residues asparagine 122 and 145–147 (ISN) each bind NAD(+). Residues asparagine 147 and arginine 181 each coordinate substrate. Residue histidine 205 is the Proton acceptor of the active site. Methionine 256 serves as a coordination point for NAD(+).

It belongs to the LDH/MDH superfamily. MDH type 1 family. Homodimer. As to expression, expressed in rosette leaves at low levels.

Its subcellular location is the mitochondrion matrix. The catalysed reaction is (S)-malate + NAD(+) = oxaloacetate + NADH + H(+). Functionally, catalyzes a reversible NAD-dependent dehydrogenase reaction involved in central metabolism and redox homeostasis between organelle compartments. Required for carbon dioxide and energy partitioning in leaves. May limit photorespiration during the dark phase. Can convert 2-ketoglutarate to L-2-hydroxyglutarate in vitro. The sequence is that of Malate dehydrogenase 2, mitochondrial from Arabidopsis thaliana (Mouse-ear cress).